The chain runs to 383 residues: Chitinase-3-like protein 1 (383 aa).

Residues Met-1–Ala-21 form the signal peptide. The GH18 domain maps to Tyr-22 to Val-383. The cysteines at positions 26 and 51 are disulfide-linked. Asn-60 is a glycosylation site (N-linked (GlcNAc...) asparagine). Residues Glu-70–Trp-71, Gly-97–Asn-100, Tyr-141, Leu-204–Asp-207, and Arg-263 contribute to the chitin site. A disulfide bridge links Cys-300 with Cys-364. The important for AKT1 activation and IL8 production stretch occupies residues Gln-324 to Ala-338. Trp-352 is a chitin binding site. Asn-367 is a glycosylation site (N-linked (GlcNAc...) asparagine).

Belongs to the glycosyl hydrolase 18 family. As to quaternary structure, monomer.

The protein resides in the secreted. It is found in the extracellular space. The protein localises to the cytoplasm. It localises to the perinuclear region. Its subcellular location is the endoplasmic reticulum. Functionally, carbohydrate-binding lectin with a preference for chitin. Has no chitinase activity. May play a role in tissue remodeling and in the capacity of cells to respond to and cope with changes in their environment. Plays a role in T-helper cell type 2 (Th2) inflammatory response and IL-13-induced inflammation, regulating allergen sensitization, inflammatory cell apoptosis, dendritic cell accumulation and M2 macrophage differentiation. Facilitates invasion of pathogenic enteric bacteria into colonic mucosa and lymphoid organs. Mediates activation of AKT1 signaling pathway and subsequent IL8 production in colonic epithelial cells. Regulates antibacterial responses in lung by contributing to macrophage bacterial killing, controlling bacterial dissemination and augmenting host tolerance. Also regulates hyperoxia-induced injury, inflammation and epithelial apoptosis in lung. This is Chitinase-3-like protein 1 (CHI3L1) from Capra hircus (Goat).